The sequence spans 1056 residues: Carbamoyl phosphate synthase large chain (1056 aa).

The segment at 1–398 (MPRDPSIKKV…AFLKALRSLD (398 aa)) is carboxyphosphate synthetic domain. Positions 127, 167, 173, 174, 206, 208, 213, 239, 240, 241, 282, and 295 each coordinate ATP. Positions 131 to 324 (RDLMNRIGEP…IARVASKIAI (194 aa)) constitute an ATP-grasp 1 domain. Mg(2+) contacts are provided by glutamine 282, glutamate 295, and asparagine 297. Mn(2+)-binding residues include glutamine 282, glutamate 295, and asparagine 297. Residues 399 to 532 (TDVEHHTVLS…STYGDKVCEV (134 aa)) are oligomerization domain. The tract at residues 533-921 (THSDRKKVMI…YKASIAAHNR (389 aa)) is carbamoyl phosphate synthetic domain. The 192-residue stretch at 663–854 (SVLLDSLSIP…LAKIAARVMM (192 aa)) folds into the ATP-grasp 2 domain. ATP-binding residues include arginine 699, arginine 738, leucine 740, glutamate 745, glycine 770, valine 771, histidine 772, serine 773, glutamine 813, and glutamate 825. Residues glutamine 813, glutamate 825, and asparagine 827 each contribute to the Mg(2+) site. Positions 813, 825, and 827 each coordinate Mn(2+). An MGS-like domain is found at 920–1056 (NRLPKSGNVF…IEPLQHYIGR (137 aa)). The tract at residues 922–1056 (LPKSGNVFIS…IEPLQHYIGR (135 aa)) is allosteric domain.

The protein belongs to the CarB family. In terms of assembly, composed of two chains; the small (or glutamine) chain promotes the hydrolysis of glutamine to ammonia, which is used by the large (or ammonia) chain to synthesize carbamoyl phosphate. Tetramer of heterodimers (alpha,beta)4. Mg(2+) serves as cofactor. Requires Mn(2+) as cofactor.

The catalysed reaction is hydrogencarbonate + L-glutamine + 2 ATP + H2O = carbamoyl phosphate + L-glutamate + 2 ADP + phosphate + 2 H(+). It carries out the reaction hydrogencarbonate + NH4(+) + 2 ATP = carbamoyl phosphate + 2 ADP + phosphate + 2 H(+). It functions in the pathway amino-acid biosynthesis; L-arginine biosynthesis; carbamoyl phosphate from bicarbonate: step 1/1. The protein operates within pyrimidine metabolism; UMP biosynthesis via de novo pathway; (S)-dihydroorotate from bicarbonate: step 1/3. Its function is as follows. Large subunit of the glutamine-dependent carbamoyl phosphate synthetase (CPSase). CPSase catalyzes the formation of carbamoyl phosphate from the ammonia moiety of glutamine, carbonate, and phosphate donated by ATP, constituting the first step of 2 biosynthetic pathways, one leading to arginine and/or urea and the other to pyrimidine nucleotides. The large subunit (synthetase) binds the substrates ammonia (free or transferred from glutamine from the small subunit), hydrogencarbonate and ATP and carries out an ATP-coupled ligase reaction, activating hydrogencarbonate by forming carboxy phosphate which reacts with ammonia to form carbamoyl phosphate. This Methanospirillum hungatei JF-1 (strain ATCC 27890 / DSM 864 / NBRC 100397 / JF-1) protein is Carbamoyl phosphate synthase large chain.